Here is a 229-residue protein sequence, read N- to C-terminus: ABC transporter I family member 1 (229 aa).

In terms of domain architecture, ABC transporter spans 11–228 (LLLQNVSCMR…LIDMLDRADI (218 aa)). 43-50 (GTNGSGKS) contacts ATP.

It belongs to the ABC transporter superfamily. ABCI family.

It is found in the membrane. It carries out the reaction heme b(in) + ATP + H2O = heme b(out) + ADP + phosphate + H(+). Functionally, part of the ABC transporter complex CcmAB involved in the biogenesis of c-type cytochromes; once thought to export heme, this seems not to be the case, but its exact role is uncertain. Responsible for energy coupling to the transport system. This Arabidopsis thaliana (Mouse-ear cress) protein is ABC transporter I family member 1 (ABCI1).